Here is a 193-residue protein sequence, read N- to C-terminus: Non-specific lipid transfer protein GPI-anchored 2 (193 aa).

The N-terminal stretch at 1–22 (MSNVVVIAVVLIVASLTGHVSA) is a signal peptide. Disulfide bonds link C38-C83, C48-C67, C68-C110, and C81-C120. N-linked (GlcNAc...) asparagine glycosylation occurs at N44. Positions 143-164 (APGSMSGAESPGGFGSGPSASR) are disordered. A lipid anchor (GPI-anchor amidated glycine) is attached at G165. Positions 166–193 (SDAPSSAPYSLFLNLIIFPLAFAFYIFC) are cleaved as a propeptide — removed in mature form.

This sequence belongs to the plant LTP family. Post-translationally, O-glycosylated on hydroxyprolines; noncontiguous hydroxylproline residues are glycosylated with arabinogalactan. As to expression, up-regulated in the epidermis of top stems. Expressed in roots, cotyledons, seedlings, leaves, stems, buds, flower and silique walls. Preferentially expressed in the shoot apical meristem and the root meristem. Also detected in expanding leaves and petals, developing flowers, and elongating pistils, stamens and siliques.

Its subcellular location is the cell membrane. Functionally, lipid transfer protein that, together with LTPG1, binds to lipids and functions as a component of the cuticular lipid export machinery that performs extensive export of intracellular lipids (e.g. C29 alkane) from epidermal cells to the surface to build the cuticular wax layer and silique walls. Contributes to pre-invasive defense against some non-host powdery mildew pathogens by preventing the penetration of the epidermal cell wall by the fungal agents (e.g. Blumeria graminis f. sp. hordei (Bgh)). Involved in seed and ovule maturation and development, probably by regulating the fatty acids homeostasis during suberin and sporopollenin biosynthesis or deposition. This is Non-specific lipid transfer protein GPI-anchored 2 from Arabidopsis thaliana (Mouse-ear cress).